Reading from the N-terminus, the 235-residue chain is Small ribosomal subunit protein uS2 (235 aa).

This sequence belongs to the universal ribosomal protein uS2 family.

The chain is Small ribosomal subunit protein uS2 from Geobacillus sp. (strain WCH70).